Reading from the N-terminus, the 685-residue chain is DNA-directed RNA polymerase subunit beta' (685 aa).

Positions 69, 71, 87, and 90 each coordinate Zn(2+). The Mg(2+) site is built by aspartate 492, aspartate 494, and aspartate 496.

It belongs to the RNA polymerase beta' chain family. RpoC1 subfamily. In plastids the minimal PEP RNA polymerase catalytic core is composed of four subunits: alpha, beta, beta', and beta''. When a (nuclear-encoded) sigma factor is associated with the core the holoenzyme is formed, which can initiate transcription. Mg(2+) is required as a cofactor. Requires Zn(2+) as cofactor.

The protein resides in the plastid. Its subcellular location is the chloroplast. It catalyses the reaction RNA(n) + a ribonucleoside 5'-triphosphate = RNA(n+1) + diphosphate. Functionally, DNA-dependent RNA polymerase catalyzes the transcription of DNA into RNA using the four ribonucleoside triphosphates as substrates. The sequence is that of DNA-directed RNA polymerase subunit beta' from Dioscorea elephantipes (Elephant's foot yam).